A 649-amino-acid chain; its full sequence is Protein WHI4 (649 aa).

2 positions are modified to phosphoserine: serine 22 and serine 206. Disordered regions lie at residues 196–217 (EHVSSGTTNSSPKNYQLSSSAQ) and 228–247 (ISYGKTSSSPLGPSAAKPRP). Over residues 228-238 (ISYGKTSSSPL) the composition is skewed to polar residues. Phosphoserine occurs at positions 258 and 283. Disordered stretches follow at residues 438-461 (LDLNLQTENGHPQSSAPNGSSIFN) and 604-649 (QLPH…YGKS). The region spanning 533–625 (NTLYVGNLPP…GGIRLSFSKN (93 aa)) is the RRM domain. Over residues 631–649 (GSNSRSKSGYSFNGSYGKS) the composition is skewed to polar residues.

In terms of processing, phosphorylated by PKA in vitro.

Its subcellular location is the cytoplasm. Has a partially redundant function to WHI3, a dosage-dependent modulator of cell size. The sequence is that of Protein WHI4 (WHI4) from Saccharomyces cerevisiae (strain ATCC 204508 / S288c) (Baker's yeast).